A 177-amino-acid chain; its full sequence is Isopentenyl-diphosphate Delta-isomerase (177 aa).

Positions 22 and 28 each coordinate Mn(2+). The Nudix hydrolase domain occupies 26-160 (LRHMAISVFV…PERFTPWLRI (135 aa)). Cys62 is a catalytic residue. His64 serves as a coordination point for Mn(2+). Glu82 is a Mg(2+) binding site. Mn(2+) contacts are provided by Glu108 and Glu110. Glu110 is an active-site residue.

Belongs to the IPP isomerase type 1 family. Mg(2+) is required as a cofactor. The cofactor is Mn(2+).

The protein resides in the cytoplasm. It carries out the reaction isopentenyl diphosphate = dimethylallyl diphosphate. It participates in isoprenoid biosynthesis; dimethylallyl diphosphate biosynthesis; dimethylallyl diphosphate from isopentenyl diphosphate: step 1/1. The protein operates within porphyrin-containing compound metabolism; chlorophyll biosynthesis. Its function is as follows. Catalyzes the 1,3-allylic rearrangement of the homoallylic substrate isopentenyl (IPP) to its highly electrophilic allylic isomer, dimethylallyl diphosphate (DMAPP). This is Isopentenyl-diphosphate Delta-isomerase from Cereibacter sphaeroides (strain ATCC 17029 / ATH 2.4.9) (Rhodobacter sphaeroides).